Here is a 261-residue protein sequence, read N- to C-terminus: Ribonuclease PH (261 aa).

Phosphate contacts are provided by residues arginine 87 and 125 to 127 (GTR).

Belongs to the RNase PH family. In terms of assembly, homohexameric ring arranged as a trimer of dimers.

It carries out the reaction tRNA(n+1) + phosphate = tRNA(n) + a ribonucleoside 5'-diphosphate. In terms of biological role, phosphorolytic 3'-5' exoribonuclease that plays an important role in tRNA 3'-end maturation. Removes nucleotide residues following the 3'-CCA terminus of tRNAs; can also add nucleotides to the ends of RNA molecules by using nucleoside diphosphates as substrates, but this may not be physiologically important. Probably plays a role in initiation of 16S rRNA degradation (leading to ribosome degradation) during starvation. This Caldanaerobacter subterraneus subsp. tengcongensis (strain DSM 15242 / JCM 11007 / NBRC 100824 / MB4) (Thermoanaerobacter tengcongensis) protein is Ribonuclease PH.